The following is a 104-amino-acid chain: MLNCVFLEGEIESTKWSHKKTGFLVTIKQKRLFGERSFTDFFVFYANGQLAFELEAYTQKFKTISIEGILRTYLEKRSGIWKTTIEVVKIMKPNSKVMIDYQES.

This is an uncharacterized protein from Mycoplasma genitalium (strain ATCC 33530 / DSM 19775 / NCTC 10195 / G37) (Mycoplasmoides genitalium).